Consider the following 148-residue polypeptide: Helix-loop-helix protein 14 (148 aa).

Disordered stretches follow at residues 1 to 21 (MAKKNQVARNERERKRVHQVN), 63 to 83 (DPQQPSVSSSTPDYTMNNSNN), and 112 to 132 (GDVSHNFNSPTSSVSSSSYSP). The basic motif stretch occupies residues 4 to 17 (KNQVARNERERKRV). The region spanning 4–56 (KNQVARNERERKRVHQVNHGFDVLRNRLQPKNHTKKWSKADTLREAVKYIQQL) is the bHLH domain. The helix-loop-helix motif stretch occupies residues 18–56 (HQVNHGFDVLRNRLQPKNHTKKWSKADTLREAVKYIQQL). Residues 63 to 78 (DPQQPSVSSSTPDYTM) show a composition bias toward polar residues. A compositionally biased stretch (low complexity) spans 120 to 132 (SPTSSVSSSSYSP).

The protein localises to the nucleus. Probable transcription factor, involved in determining neuroblast cell fate, morphogenesis and aspects of terminal differentiation in both left/right symmetric and asymmetric neuronal lineages. The protein is Helix-loop-helix protein 14 of Caenorhabditis elegans.